A 579-amino-acid polypeptide reads, in one-letter code: Nuclear receptor coactivator 5 (579 aa).

N-acetylmethionine is present on Met-1. The tract at residues 1-77 (MNTAPSRPSP…DIRDHRDSRS (77 aa)) is disordered. Positions 1 to 158 (MNTAPSRPSP…RDSFDGRGPP (158 aa)) are transcription repression. Thr-3 is modified (phosphothreonine). A phosphoserine mark is found at Ser-9, Ser-21, Ser-29, Ser-34, Ser-96, Ser-116, Ser-126, Ser-143, and Ser-151. Basic and acidic residues predominate over residues 11–77 (TRRDPYSFGD…DIRDHRDSRS (67 aa)). Positions 148–172 (YRDSFDGRGPPGPESQSRAKERLKR) are disordered. A Phosphothreonine modification is found at Thr-274. The LXXLL motif motif lies at 345-349 (LINLL). Ser-378 and Ser-381 each carry phosphoserine. 2 disordered regions span residues 378 to 428 (SADS…PTSQ) and 446 to 529 (ANSS…RPVS). Low complexity-rich tracts occupy residues 395 to 420 (SGSSLKSQPSSQPLQSGQVLPSATPT) and 446 to 460 (ANSSSASPSVATGSS). The interval 458-579 (GSSQNQNFST…APMGSYQRHY (122 aa)) is transcription activation. A compositionally biased stretch (polar residues) spans 461–485 (QNQNFSTAANSQPQQRPQASGNQPP).

Binds HTATIP2/TIP30. Interacts with YLPM1. Forms a complex with ILF2, ILF3, YLPM1, KHDRBS1, RBMX and PPP1CA.

The protein resides in the nucleus. In terms of biological role, nuclear receptor coregulator that can have both coactivator and corepressor functions. Interacts with nuclear receptors for steroids (ESR1 and ESR2) independently of the steroid binding domain (AF-2) of the ESR receptors, and with the orphan nuclear receptor NR1D2. Involved in the coactivation of nuclear steroid receptors (ER) as well as the corepression of MYC in response to 17-beta-estradiol (E2). In Mus musculus (Mouse), this protein is Nuclear receptor coactivator 5 (Ncoa5).